The primary structure comprises 464 residues: Protein FAM90A22 (464 aa).

3 disordered regions span residues 1–43 (MMAR…PRLK), 70–389 (PATL…HDGA), and 415–437 (HSPEKPGAFLAQSPHVSEKSEAP). 2 stretches are compositionally biased toward basic and acidic residues: residues 74-89 (GKKEGKENLKPWKPRA) and 97-114 (NKDKGEKEERPRQQDPQR). The segment covering 182 to 197 (SLSPLRKTSLSSSSSL) has biased composition (low complexity).

It belongs to the FAM90 family.

The polypeptide is Protein FAM90A22 (Homo sapiens (Human)).